The primary structure comprises 457 residues: UDP-glycosyltransferase 708C2 (457 aa).

His32 functions as the Proton acceptor in the catalytic mechanism. His32 is an an anthocyanidin binding site. Asp129 acts as the Charge relay in catalysis. UDP-alpha-D-glucose is bound at residue Thr150. Residues 279-280 (NR) form a UDP region. The UDP-alpha-D-glucose site is built by Val341, Gln343, His358, Trp361, Asn362, Ser363, and Glu366. Gly381 is a binding site for an anthocyanidin. UDP-alpha-D-glucose-binding residues include Asp382 and Gln383.

It belongs to the UDP-glycosyltransferase family. Expressed in cotyledons. Not detected in flowers, leaves, roots and hypocotyls.

The enzyme catalyses a 3'-hydro-2'-hydroxy-beta-oxodihydrochalcone + UDP-alpha-D-glucose = a 3'-(beta-D-glucopyranosyl)-2'-hydroxy-beta-oxodihydrochalcone + UDP + H(+). UDP-glucose-dependent glucosyltransferase catalyzing the c-glucosylation of 2-hydroxyflavanones (2-hydroxynaringenin, 2-hydroxyeriodictyol and 2-hydroxypinocembrin) and phloretin. No activity with flavanones, flavones or flavonols. The protein is UDP-glycosyltransferase 708C2 of Fagopyrum esculentum (Common buckwheat).